A 121-amino-acid chain; its full sequence is Phospholipase A2 homolog EPL_00195 (121 aa).

Disulfide bonds link Cys25-Cys114, Cys27-Cys43, Cys42-Cys94, Cys48-Cys121, Cys49-Cys87, Cys56-Cys80, and Cys74-Cys85. The interval 104–116 (KKYRIYPNFLCRG) is important for membrane-damaging activities in eukaryotes and bacteria; heparin-binding.

It belongs to the phospholipase A2 family. Group II subfamily. S49 sub-subfamily. As to quaternary structure, monomer. Expressed by the venom gland.

Its subcellular location is the secreted. Its function is as follows. Snake venom phospholipase A2 homolog that lacks enzymatic activity. Shows high myotoxin activities and displays edema-inducing activities. Has cytotoxic activities against HUVEC cells (LC(50)=2.5 uL) and human lung adenocarcinoma A549 cells (LC(50)=2.9 uL). The polypeptide is Phospholipase A2 homolog EPL_00195 (Echis pyramidum leakeyi (Leakey's carpet viper)).